Here is a 288-residue protein sequence, read N- to C-terminus: tRNA dimethylallyltransferase (288 aa).

G2–S9 provides a ligand contact to ATP. T4–S9 contacts substrate. The tract at residues D27–Q30 is interaction with substrate tRNA.

It belongs to the IPP transferase family. In terms of assembly, monomer. It depends on Mg(2+) as a cofactor.

The catalysed reaction is adenosine(37) in tRNA + dimethylallyl diphosphate = N(6)-dimethylallyladenosine(37) in tRNA + diphosphate. Its function is as follows. Catalyzes the transfer of a dimethylallyl group onto the adenine at position 37 in tRNAs that read codons beginning with uridine, leading to the formation of N6-(dimethylallyl)adenosine (i(6)A). The protein is tRNA dimethylallyltransferase of Frankia alni (strain DSM 45986 / CECT 9034 / ACN14a).